Here is a 168-residue protein sequence, read N- to C-terminus: Peptidyl-Lys metalloendopeptidase (168 aa).

Disulfide bonds link Cys-6–Cys-76 and Cys-78–Cys-98. Zn(2+) is bound at residue His-118. Residue Glu-119 is part of the active site. The Zn(2+) site is built by His-122 and Asp-131.

It depends on Zn(2+) as a cofactor.

Its subcellular location is the secreted. It catalyses the reaction Preferential cleavage in proteins: -Xaa-|-Lys- (in which Xaa may be Pro).. Inhibited by chelating agents such as EDTA and 1,10-phenanthroline. The sequence is that of Peptidyl-Lys metalloendopeptidase (MEP) from Pleurotus ostreatus (Oyster mushroom).